Here is a 106-residue protein sequence, read N- to C-terminus: Large ribosomal subunit protein eL42 (106 aa).

The segment at 36 to 56 (FAQGKRRYDRKQSGYGGQTKP) is disordered.

This sequence belongs to the eukaryotic ribosomal protein eL42 family.

This is Large ribosomal subunit protein eL42 (RPL44) from Coprinopsis cinerea (strain Okayama-7 / 130 / ATCC MYA-4618 / FGSC 9003) (Inky cap fungus).